A 122-amino-acid polypeptide reads, in one-letter code: Large ribosomal subunit protein uL18 (122 aa).

It belongs to the universal ribosomal protein uL18 family. In terms of assembly, part of the 50S ribosomal subunit; part of the 5S rRNA/L5/L18/L25 subcomplex. Contacts the 5S and 23S rRNAs.

Its function is as follows. This is one of the proteins that bind and probably mediate the attachment of the 5S RNA into the large ribosomal subunit, where it forms part of the central protuberance. This is Large ribosomal subunit protein uL18 from Lachnoclostridium phytofermentans (strain ATCC 700394 / DSM 18823 / ISDg) (Clostridium phytofermentans).